A 478-amino-acid chain; its full sequence is Lysosome membrane protein 2 (478 aa).

The Cytoplasmic portion of the chain corresponds to 2–4; sequence ARC. Residues 5-27 traverse the membrane as a helical segment; the sequence is CFYTAGTLSLLLLVTSVTLLVAR. The Lumenal portion of the chain corresponds to 28–433; that stretch reads VFQKAVDQTI…QLKSVINTTL (406 aa). N-linked (GlcNAc...) asparagine glycans are attached at residues asparagine 45, asparagine 68, asparagine 105, and asparagine 122. Residues 155–191 are important for interaction with GBA1; sequence IIEAMLKAYQQTLFVTHTVHELLWGYKDEVLSLVHIF. N-linked (GlcNAc...) asparagine glycans are attached at residues asparagine 206, asparagine 224, asparagine 249, and asparagine 304. Cystine bridges form between cysteine 274–cysteine 329 and cysteine 312–cysteine 318. 3 N-linked (GlcNAc...) asparagine glycosylation sites follow: asparagine 325, asparagine 412, and asparagine 430. A helical membrane pass occupies residues 434 to 459; that stretch reads IVTNIPYIIMALGVFFGLIFTWLACR. The Cytoplasmic segment spans residues 460–478; the sequence is GQGSTDEGTADERAPLIRT.

It belongs to the CD36 family. Interacts with GBA1. Post-translationally, acylated by palmitic acid group(s).

The protein localises to the lysosome membrane. Acts as a lysosomal receptor for glucosylceramidase (GBA1) targeting. This chain is Lysosome membrane protein 2 (Scarb2), found in Rattus norvegicus (Rat).